The sequence spans 362 residues: Anthranilate phosphoribosyltransferase 2 (362 aa).

Residues Gly-103, 106 to 107 (GD), Thr-111, 113 to 116 (NIST), 131 to 139 (KHGNRSASS), and Ser-143 contribute to the 5-phospho-alpha-D-ribose 1-diphosphate site. Gly-103 serves as a coordination point for anthranilate. Position 115 (Ser-115) interacts with Mg(2+). Asn-134 contributes to the anthranilate binding site. Anthranilate is bound at residue Arg-189. Residues Asp-248 and Glu-249 each contribute to the Mg(2+) site.

Belongs to the anthranilate phosphoribosyltransferase family. Homodimer. Mg(2+) serves as cofactor.

It catalyses the reaction N-(5-phospho-beta-D-ribosyl)anthranilate + diphosphate = 5-phospho-alpha-D-ribose 1-diphosphate + anthranilate. The protein operates within amino-acid biosynthesis; L-tryptophan biosynthesis; L-tryptophan from chorismate: step 2/5. Functionally, catalyzes the transfer of the phosphoribosyl group of 5-phosphorylribose-1-pyrophosphate (PRPP) to anthranilate to yield N-(5'-phosphoribosyl)-anthranilate (PRA). The sequence is that of Anthranilate phosphoribosyltransferase 2 from Nostoc sp. (strain PCC 7120 / SAG 25.82 / UTEX 2576).